Reading from the N-terminus, the 434-residue chain is ATP-dependent protease ATPase subunit HslU (434 aa).

Residues Ile18, 60–65, Asp247, Glu312, and Arg384 each bind ATP; that span reads GVGKTE.

It belongs to the ClpX chaperone family. HslU subfamily. A double ring-shaped homohexamer of HslV is capped on each side by a ring-shaped HslU homohexamer. The assembly of the HslU/HslV complex is dependent on binding of ATP.

The protein localises to the cytoplasm. Functionally, ATPase subunit of a proteasome-like degradation complex; this subunit has chaperone activity. The binding of ATP and its subsequent hydrolysis by HslU are essential for unfolding of protein substrates subsequently hydrolyzed by HslV. HslU recognizes the N-terminal part of its protein substrates and unfolds these before they are guided to HslV for hydrolysis. The protein is ATP-dependent protease ATPase subunit HslU of Brucella melitensis biotype 1 (strain ATCC 23456 / CCUG 17765 / NCTC 10094 / 16M).